The primary structure comprises 126 residues: Small ribosomal subunit protein uS13c (126 aa).

The disordered stretch occupies residues 97 to 126 (PLRGQRTRTNARTRRGGKKTVAGKKKAPRK). Residues 101–126 (QRTRTNARTRRGGKKTVAGKKKAPRK) are compositionally biased toward basic residues.

It belongs to the universal ribosomal protein uS13 family. In terms of assembly, part of the 30S ribosomal subunit.

The protein localises to the plastid. It localises to the chloroplast. Located at the top of the head of the 30S subunit, it contacts several helices of the 16S rRNA. The protein is Small ribosomal subunit protein uS13c of Porphyra purpurea (Red seaweed).